The following is a 627-amino-acid chain: 1-deoxy-D-xylulose-5-phosphate synthase (627 aa).

Thiamine diphosphate contacts are provided by residues His-72 and 113–115 (GHS). Asp-144 provides a ligand contact to Mg(2+). Thiamine diphosphate is bound by residues 145-146 (GA), Asn-173, Tyr-283, and Glu-366. Asn-173 contributes to the Mg(2+) binding site.

It belongs to the transketolase family. DXPS subfamily. In terms of assembly, homodimer. Mg(2+) serves as cofactor. Requires thiamine diphosphate as cofactor.

It carries out the reaction D-glyceraldehyde 3-phosphate + pyruvate + H(+) = 1-deoxy-D-xylulose 5-phosphate + CO2. Its pathway is metabolic intermediate biosynthesis; 1-deoxy-D-xylulose 5-phosphate biosynthesis; 1-deoxy-D-xylulose 5-phosphate from D-glyceraldehyde 3-phosphate and pyruvate: step 1/1. In terms of biological role, catalyzes the acyloin condensation reaction between C atoms 2 and 3 of pyruvate and glyceraldehyde 3-phosphate to yield 1-deoxy-D-xylulose-5-phosphate (DXP). The chain is 1-deoxy-D-xylulose-5-phosphate synthase from Macrococcus caseolyticus (strain JCSC5402) (Macrococcoides caseolyticum).